A 180-amino-acid polypeptide reads, in one-letter code: Ribulose bisphosphate carboxylase small subunit, chloroplastic 3 (180 aa).

The transit peptide at methionine 1–glutamine 56 directs the protein to the chloroplast.

This sequence belongs to the RuBisCO small chain family. In terms of assembly, heterohexadecamer of 8 large and 8 small subunits.

Its subcellular location is the plastid. The protein localises to the chloroplast. Functionally, ruBisCO catalyzes two reactions: the carboxylation of D-ribulose 1,5-bisphosphate, the primary event in carbon dioxide fixation, as well as the oxidative fragmentation of the pentose substrate. Both reactions occur simultaneously and in competition at the same active site. Although the small subunit is not catalytic it is essential for maximal activity. This is Ribulose bisphosphate carboxylase small subunit, chloroplastic 3 from Amaranthus hypochondriacus (Prince-of-Wales feather).